We begin with the raw amino-acid sequence, 309 residues long: Carbamate kinase (309 aa).

This sequence belongs to the carbamate kinase family.

It is found in the cytoplasm. The catalysed reaction is hydrogencarbonate + NH4(+) + ATP = carbamoyl phosphate + ADP + H2O + H(+). It participates in metabolic intermediate metabolism; carbamoyl phosphate degradation; CO(2) and NH(3) from carbamoyl phosphate: step 1/1. This Staphylococcus haemolyticus (strain JCSC1435) protein is Carbamate kinase (arcC).